Here is a 327-residue protein sequence, read N- to C-terminus: Prenyl transferase janC (327 aa).

Residues 3–23 traverse the membrane as a helical segment; sequence FPGAGPILGAIAVSSCLYFLF. Lysine 63 and histidine 96 together coordinate isopentenyl diphosphate. Mg(2+)-binding residues include aspartate 103 and aspartate 107. Residues arginine 112 and lysine 196 each coordinate dimethylallyl diphosphate. An N-linked (GlcNAc...) asparagine glycan is attached at asparagine 211.

Belongs to the FPP/GGPP synthase family.

The protein resides in the membrane. It participates in secondary metabolite biosynthesis. In terms of biological role, prenyl transferase; part of the gene cluster that mediates the biosynthesis of the indole diterpenes janthitremanes such as shearinine K or shearinine A. The geranylgeranyl diphosphate (GGPP) synthase janG catalyzes the first step in janthitremane biosynthesis via conversion of farnesyl pyrophosphate and isopentyl pyrophosphate into geranylgeranyl pyrophosphate (GGPP). Condensation of indole-3-glycerol phosphate with GGPP by the prenyl transferase janC then forms 3-geranylgeranylindole (3-GGI). Epoxidation by the FAD-dependent monooxygenase janM leads to a epoxidized-GGI that is substrate of the terpene cyclase janB for cyclization to yield paspaline. Paspaline is subsequently converted to 13-desoxypaspaline by the cytochrome P450 monooxygenase janP, via beta-PC-M6 in a series of alpha-face oxidations. The cytochrome P450 monooxygenase janQ is proposed to carry out sequential beta-face oxidation steps at C-7 and C-13 of 13-desoxypaspaline to form paspalicine and paspalinine respectively. The indole diterpene prenyltransferase janD may then convert paspalinine into shearinine K which is substrate of janO and/or additional enzymes for oxidation and cyclization to generate shearinine A. In Penicillium janthinellum (Penicillium vitale), this protein is Prenyl transferase janC.